The chain runs to 340 residues: Lipase chaperone (340 aa).

The helical transmembrane segment at 4 to 24 (ILLLIPLAFAASLAWFVWLEP) threads the bilayer. Residues 29–51 (ETAPPASPQAGADRAPPAASAGE) form a disordered region. Residues 36 to 51 (PQAGADRAPPAASAGE) show a composition bias toward low complexity.

The protein belongs to the lipase chaperone family.

The protein localises to the cell inner membrane. May be involved in the folding of the extracellular lipase during its passage through the periplasm. The protein is Lipase chaperone (lifO) of Pseudomonas aeruginosa (strain ATCC 15692 / DSM 22644 / CIP 104116 / JCM 14847 / LMG 12228 / 1C / PRS 101 / PAO1).